Here is a 165-residue protein sequence, read N- to C-terminus: Large ribosomal subunit protein uL10 (165 aa).

This sequence belongs to the universal ribosomal protein uL10 family. Part of the ribosomal stalk of the 50S ribosomal subunit. The N-terminus interacts with L11 and the large rRNA to form the base of the stalk. The C-terminus forms an elongated spine to which L12 dimers bind in a sequential fashion forming a multimeric L10(L12)X complex.

In terms of biological role, forms part of the ribosomal stalk, playing a central role in the interaction of the ribosome with GTP-bound translation factors. In Mycoplasma mycoides subsp. mycoides SC (strain CCUG 32753 / NCTC 10114 / PG1), this protein is Large ribosomal subunit protein uL10.